A 535-amino-acid polypeptide reads, in one-letter code: CTP synthase (535 aa).

Residues 1-266 form an amidoligase domain region; it reads MKFVVITGGV…GDYICERLGL (266 aa). CTP is bound at residue serine 12. Serine 12 contacts UTP. Residues 13 to 18 and aspartate 70 each bind ATP; that span reads GIGKGI. Residues aspartate 70 and glutamate 140 each contribute to the Mg(2+) site. CTP contacts are provided by residues 147–149, 187–192, and lysine 223; these read DIE and KTKPTQ. Residues 187–192 and lysine 223 contribute to the UTP site; that span reads KTKPTQ. Residues 291–535 form the Glutamine amidotransferase type-1 domain; that stretch reads RIAVVGKYVD…IKAAAGQGPD (245 aa). An L-glutamine-binding site is contributed by glycine 355. Cysteine 382 functions as the Nucleophile; for glutamine hydrolysis in the catalytic mechanism. L-glutamine is bound by residues 383–386, glutamate 406, and arginine 464; that span reads LGFQ. Residues histidine 508 and glutamate 510 contribute to the active site.

This sequence belongs to the CTP synthase family. As to quaternary structure, homotetramer.

It catalyses the reaction UTP + L-glutamine + ATP + H2O = CTP + L-glutamate + ADP + phosphate + 2 H(+). The enzyme catalyses L-glutamine + H2O = L-glutamate + NH4(+). The catalysed reaction is UTP + NH4(+) + ATP = CTP + ADP + phosphate + 2 H(+). Its pathway is pyrimidine metabolism; CTP biosynthesis via de novo pathway; CTP from UDP: step 2/2. Allosterically activated by GTP, when glutamine is the substrate; GTP has no effect on the reaction when ammonia is the substrate. The allosteric effector GTP functions by stabilizing the protein conformation that binds the tetrahedral intermediate(s) formed during glutamine hydrolysis. Inhibited by the product CTP, via allosteric rather than competitive inhibition. Its function is as follows. Catalyzes the ATP-dependent amination of UTP to CTP with either L-glutamine or ammonia as the source of nitrogen. Regulates intracellular CTP levels through interactions with the four ribonucleotide triphosphates. The chain is CTP synthase from Methanopyrus kandleri (strain AV19 / DSM 6324 / JCM 9639 / NBRC 100938).